The following is a 775-amino-acid chain: Mitosis inducer protein kinase cdr2 (775 aa).

In terms of domain architecture, Protein kinase spans 10–262 (WELGLSLGSG…MEQIREHPFL (253 aa)). ATP contacts are provided by residues 16–24 (LGSGGPNSS) and lysine 39. Aspartate 133 functions as the Proton acceptor in the catalytic mechanism. Residues serine 309, serine 311, and serine 476 each carry the phosphoserine modification. Positions 549–563 (NNIDNNNYNQPYANA) are enriched in low complexity. Positions 549–620 (NNIDNNNYNQ…TKKKLSGSPF (72 aa)) are disordered. A compositionally biased stretch (polar residues) spans 584-593 (LSQSPASYDS). 2 positions are modified to phosphoserine: serine 587 and serine 632.

Belongs to the protein kinase superfamily. CAMK Ser/Thr protein kinase family. NIM1 subfamily. In terms of assembly, interacts with blt1 and mid1. Post-translationally, autophosphorylated.

It catalyses the reaction L-seryl-[protein] + ATP = O-phospho-L-seryl-[protein] + ADP + H(+). It carries out the reaction L-threonyl-[protein] + ATP = O-phospho-L-threonyl-[protein] + ADP + H(+). Acts as a mitotic inducer. In G2 it negatively regulates wee1, a mitotic inhibitor. Also has a role in cytokinesis where it required for proper septum formation. The sequence is that of Mitosis inducer protein kinase cdr2 (cdr2) from Schizosaccharomyces pombe (strain 972 / ATCC 24843) (Fission yeast).